The sequence spans 572 residues: Urease subunit alpha (572 aa).

The Urease domain occupies 136–572 (GGIDTHIHWI…VPLAQRYFLF (437 aa)). Residues His-141, His-143, and Lys-224 each contribute to the Ni(2+) site. An N6-carboxylysine modification is found at Lys-224. His-226 serves as a coordination point for substrate. Ni(2+)-binding residues include His-253 and His-279. His-327 serves as the catalytic Proton donor. Asp-367 provides a ligand contact to Ni(2+).

The protein belongs to the metallo-dependent hydrolases superfamily. Urease alpha subunit family. As to quaternary structure, heterotrimer of UreA (gamma), UreB (beta) and UreC (alpha) subunits. Three heterotrimers associate to form the active enzyme. The cofactor is Ni cation. Post-translationally, carboxylation allows a single lysine to coordinate two nickel ions.

Its subcellular location is the cytoplasm. The catalysed reaction is urea + 2 H2O + H(+) = hydrogencarbonate + 2 NH4(+). It participates in nitrogen metabolism; urea degradation; CO(2) and NH(3) from urea (urease route): step 1/1. This chain is Urease subunit alpha, found in Actinobacillus pleuropneumoniae serotype 3 (strain JL03).